We begin with the raw amino-acid sequence, 99 residues long: uncharacterized protein (99 aa).

This is an uncharacterized protein from Thermoproteus tenax virus 1 (strain KRA1) (TTV1).